Here is a 989-residue protein sequence, read N- to C-terminus: Serine-repeat antigen protein 5 (989 aa).

Positions 1–16 are cleaved as a signal peptide; the sequence is MKSYISLFFILCVIFN. Disordered regions lie at residues 26–91 and 165–245; these read SQTG…EKQD and LPSN…RNLQ. Low complexity-rich tracts occupy residues 52–87, 167–180, and 191–225; these read QGST…STSS, SNGT…STGT, and SSSS…SSSS. A Phosphoserine modification is found at serine 167. Residue asparagine 168 is glycosylated (N-linked (GlcNAc...) asparagine). The tract at residues 208 to 245 is interaction with PTKL; it reads SSSSSSSSSSSSSSSSSSESLPANGPDSPTVKPPRNLQ. Asparagine 310 carries N-linked (GlcNAc...) asparagine glycosylation. The interaction with host VTN stretch occupies residues 365–382; that stretch reads YKYLSEDIVSNFKEIKAE. Cysteines 437 and 489 form a disulfide. Threonine 541 carries the phosphothreonine modification. Cystine bridges form between cysteine 559/cysteine 564, cysteine 573/cysteine 602, cysteine 585/cysteine 628, cysteine 619/cysteine 664, and cysteine 747/cysteine 801. The segment at 571 to 989 is thiol-protease-like; that stretch reads NNCISNLQVE…TNNECYFCYV (419 aa). Residues histidine 754 and asparagine 779 contribute to the active site. Asparagine 820 is a glycosylation site (N-linked (GlcNAc...) asparagine). A propeptide spans 835–878 (inhibition peptide); that stretch reads KASPEFYHNLYFKNFNVGKKNLFSEKEDNENNKKLGNNYIIFGQ. A Phosphoserine modification is found at serine 858.

Belongs to the peptidase C1 family. May interact (via C-terminus) with PTKL (via SAM domain). As to quaternary structure, interacts (via C-terminus) with human VTN (via hemopexin repeat 2); may form heterotetramers of two VTN and SERA5 P47 heterodimers; the interaction may protect merozoites from phagocytosis by host monocytes; VTN glycosylation appears to be dispensable for the interaction. In terms of assembly, monomer. Interacts with kinase CPK1/CDPK1 at the schizont stage. Post-translationally, phosphorylation by CPK1/CDPK1 increases SERA5 protease activity towards a synthetic peptide in vitro. In terms of processing, just prior to merozoite egress from host erythrocytes, proteolytically cleaved into multiple fragments. Cleaved by SUB1 into p47 and p73, p73 is further cleaved by SUB1 into p56 and p18 and p56 is further processed into p50 by an unidentified protease. p47 remains covalently associated with p18 via disulfide bond. p47 can be processed into p25n and p25c by SUB1. p25c and p25n remain associated with p18. Proteolytic processing is essential for merozoite egress from host erythrocytes. The cleavage of the propeptide to produce p50 is necessary for protease activity and to promote merozoite egress.

It is found in the parasitophorous vacuole. It localises to the secreted. The protein resides in the cell membrane. Functionally, plays an essential role during the asexual blood stage development by controlling the kinetics of merozoite egress from host erythrocytes. Specifically, prevents premature rupture of the parasitophorous vacuole and host erythrocyte membranes. May prevent merozoite phagocytosis by host monocytes via interaction with host VTN at the merozoite surface. Plays a role in parasite growth. Its function is as follows. Protease activity is controversial. In Plasmodium falciparum (isolate CDC / Honduras), this protein is Serine-repeat antigen protein 5.